The chain runs to 265 residues: 4-hydroxy-tetrahydrodipicolinate reductase (265 aa).

NAD(+) contacts are provided by residues 7–12 and Asp-33; that span reads GASGRM. Arg-34 serves as a coordination point for NADP(+). NAD(+) contacts are provided by residues 96 to 98 and 120 to 123; these read GTT and AANM. Residue His-153 is the Proton donor/acceptor of the active site. His-154 contacts (S)-2,3,4,5-tetrahydrodipicolinate. Lys-157 functions as the Proton donor in the catalytic mechanism. 163–164 contributes to the (S)-2,3,4,5-tetrahydrodipicolinate binding site; sequence GT.

The protein belongs to the DapB family.

It localises to the cytoplasm. The enzyme catalyses (S)-2,3,4,5-tetrahydrodipicolinate + NAD(+) + H2O = (2S,4S)-4-hydroxy-2,3,4,5-tetrahydrodipicolinate + NADH + H(+). The catalysed reaction is (S)-2,3,4,5-tetrahydrodipicolinate + NADP(+) + H2O = (2S,4S)-4-hydroxy-2,3,4,5-tetrahydrodipicolinate + NADPH + H(+). It participates in amino-acid biosynthesis; L-lysine biosynthesis via DAP pathway; (S)-tetrahydrodipicolinate from L-aspartate: step 4/4. In terms of biological role, catalyzes the conversion of 4-hydroxy-tetrahydrodipicolinate (HTPA) to tetrahydrodipicolinate. The sequence is that of 4-hydroxy-tetrahydrodipicolinate reductase from Burkholderia orbicola (strain MC0-3).